The chain runs to 105 residues: Large ribosomal subunit protein uL24 (105 aa).

This sequence belongs to the universal ribosomal protein uL24 family. In terms of assembly, part of the 50S ribosomal subunit.

One of two assembly initiator proteins, it binds directly to the 5'-end of the 23S rRNA, where it nucleates assembly of the 50S subunit. Functionally, one of the proteins that surrounds the polypeptide exit tunnel on the outside of the subunit. The chain is Large ribosomal subunit protein uL24 from Pseudothermotoga lettingae (strain ATCC BAA-301 / DSM 14385 / NBRC 107922 / TMO) (Thermotoga lettingae).